Consider the following 1414-residue polypeptide: DNA-directed RNA polymerase subunit beta' (1414 aa).

Residues cysteine 70, cysteine 72, cysteine 85, and cysteine 88 each contribute to the Zn(2+) site. Residues aspartate 460, aspartate 462, and aspartate 464 each contribute to the Mg(2+) site. Zn(2+) contacts are provided by cysteine 814, cysteine 888, cysteine 895, and cysteine 898. Positions 1378–1414 (EREAARQLANPFEDAPVTVGGEPEAPAADTPSDDSAE) are disordered.

Belongs to the RNA polymerase beta' chain family. The RNAP catalytic core consists of 2 alpha, 1 beta, 1 beta' and 1 omega subunit. When a sigma factor is associated with the core the holoenzyme is formed, which can initiate transcription. It depends on Mg(2+) as a cofactor. Zn(2+) serves as cofactor.

The enzyme catalyses RNA(n) + a ribonucleoside 5'-triphosphate = RNA(n+1) + diphosphate. DNA-dependent RNA polymerase catalyzes the transcription of DNA into RNA using the four ribonucleoside triphosphates as substrates. The protein is DNA-directed RNA polymerase subunit beta' of Bordetella bronchiseptica (strain ATCC BAA-588 / NCTC 13252 / RB50) (Alcaligenes bronchisepticus).